The sequence spans 331 residues: Probable allantoicase (331 aa).

This sequence belongs to the allantoicase family.

The catalysed reaction is allantoate + H2O = (S)-ureidoglycolate + urea. It functions in the pathway nitrogen metabolism; (S)-allantoin degradation; (S)-ureidoglycolate from allantoate (aminidohydrolase route): step 1/1. The protein is Probable allantoicase of Pseudomonas syringae pv. tomato (strain ATCC BAA-871 / DC3000).